The sequence spans 351 residues: Meiotically up-regulated gene 1 protein (351 aa).

It is found in the cytoplasm. In terms of biological role, required for correct meiotic chromosome segregation. This chain is Meiotically up-regulated gene 1 protein (mug1), found in Schizosaccharomyces pombe (strain 972 / ATCC 24843) (Fission yeast).